The primary structure comprises 229 residues: Protein-L-isoaspartate O-methyltransferase (229 aa).

The active site involves serine 78.

This sequence belongs to the methyltransferase superfamily. L-isoaspartyl/D-aspartyl protein methyltransferase family.

The protein resides in the cytoplasm. It carries out the reaction [protein]-L-isoaspartate + S-adenosyl-L-methionine = [protein]-L-isoaspartate alpha-methyl ester + S-adenosyl-L-homocysteine. Functionally, catalyzes the methyl esterification of L-isoaspartyl residues in peptides and proteins that result from spontaneous decomposition of normal L-aspartyl and L-asparaginyl residues. It plays a role in the repair and/or degradation of damaged proteins. The protein is Protein-L-isoaspartate O-methyltransferase of Chromohalobacter salexigens (strain ATCC BAA-138 / DSM 3043 / CIP 106854 / NCIMB 13768 / 1H11).